We begin with the raw amino-acid sequence, 226 residues long: MKVNHSISRFRPASWFEKTKIIPPQVYIFRNLEYGQVLYSQFPNFSQTQVDKLFVRPNWSNRKPSLRRDIWKCMCVVNLQNYKQSVHLYQNLCRLRYLRDVAQRKESDKLRKKDSNGHVWYSGQYRPTYCQEAVADLRESLLKVFENATPAEKQTVPAKKPSIYWEDPWRMGDKDKHWNYDVFNALGLEHKLIQRVGNIAREESVILKELAKLESHPTEQTEVSSQ.

It belongs to the mitochondrion-specific ribosomal protein mL67 family. Component of the mitochondrial large ribosomal subunit (mt-LSU). Mature yeast 74S mitochondrial ribosomes consist of a small (37S) and a large (54S) subunit. The 37S small subunit contains a 15S ribosomal RNA (15S mt-rRNA) and 34 different proteins. The 54S large subunit contains a 21S rRNA (21S mt-rRNA) and 46 different proteins.

It localises to the nucleus. The protein resides in the mitochondrion. Component of the mitochondrial ribosome (mitoribosome), a dedicated translation machinery responsible for the synthesis of mitochondrial genome-encoded proteins, including at least some of the essential transmembrane subunits of the mitochondrial respiratory chain. The mitoribosomes are attached to the mitochondrial inner membrane and translation products are cotranslationally integrated into the membrane. mL67/MHR1 also has extraribosomal functions, being involved in regulation of mitochondrial DNA recombination, maintenance and repair, and generation of homoplasmic cells. mL67/MHR1 also acts as transcription factor involved in regulation of RNA polymerase II-dependent transcription. The polypeptide is Large ribosomal subunit protein mL67 (MHR1) (Saccharomyces cerevisiae (strain ATCC 204508 / S288c) (Baker's yeast)).